A 548-amino-acid polypeptide reads, in one-letter code: Glucose-6-phosphate isomerase (548 aa).

Catalysis depends on glutamate 353, which acts as the Proton donor. Active-site residues include histidine 384 and lysine 512.

It belongs to the GPI family.

It localises to the cytoplasm. The catalysed reaction is alpha-D-glucose 6-phosphate = beta-D-fructose 6-phosphate. It functions in the pathway carbohydrate biosynthesis; gluconeogenesis. It participates in carbohydrate degradation; glycolysis; D-glyceraldehyde 3-phosphate and glycerone phosphate from D-glucose: step 2/4. Its function is as follows. Catalyzes the reversible isomerization of glucose-6-phosphate to fructose-6-phosphate. This is Glucose-6-phosphate isomerase from Pseudoalteromonas translucida (strain TAC 125).